The chain runs to 317 residues: Melanocyte-stimulating hormone receptor (317 aa).

Topologically, residues Met-1–Glu-37 are extracellular. 2 N-linked (GlcNAc...) asparagine glycosylation sites follow: Asn-15 and Asn-29. Residues Val-38–Ile-63 traverse the membrane as a helical segment. Residues Ala-64 to Pro-72 are Cytoplasmic-facing. The chain crosses the membrane as a helical span at residues Met-73 to Leu-93. Residues Glu-94–Asn-118 are Extracellular-facing. The helical transmembrane segment at Val-119–Met-140 threads the bilayer. Over Asp-141 to Trp-163 the chain is Cytoplasmic. A helical transmembrane segment spans residues Ala-164–Tyr-183. Residues Asp-184–Cys-191 lie on the Extracellular side of the membrane. A helical transmembrane segment spans residues Leu-192–Leu-211. Over Thr-212–Ala-240 the chain is Cytoplasmic. A helical membrane pass occupies residues Ala-241–Val-266. Over Cys-267–Asn-279 the chain is Extracellular. A helical membrane pass occupies residues Phe-280–Phe-300. Over Arg-301 to Trp-317 the chain is Cytoplasmic.

This sequence belongs to the G-protein coupled receptor 1 family. In terms of assembly, interacts with MGRN1, but does not undergo MGRN1-mediated ubiquitination; this interaction competes with GNAS-binding and thus inhibits agonist-induced cAMP production. Interacts with OPN3; the interaction results in a decrease in MC1R-mediated cAMP signaling and ultimately a decrease in melanin production in melanocytes.

It is found in the cell membrane. Its function is as follows. Receptor for MSH (alpha, beta and gamma) and ACTH. The activity of this receptor is mediated by G proteins which activate adenylate cyclase. Mediates melanogenesis, the production of eumelanin (black/brown) and phaeomelanin (red/yellow), via regulation of cAMP signaling in melanocytes. The protein is Melanocyte-stimulating hormone receptor (MC1R) of Galago senegalensis (Northern lesser bushbaby).